We begin with the raw amino-acid sequence, 159 residues long: MKIKLVVVGKLKEKYLKDGIAEYVKRMGTMLPLEIIELADEKIPDNASEKEAEALKKREGDKILSRIQTGDKLAILAIQGKLMSSEELADFVKKAEVYGTGNLVFVIGGSLGLSDEVYKRSDLQISFGRMTLPHQLMRLVLVEQIYRAQMINRGSAYHK.

S-adenosyl-L-methionine-binding positions include Leu76, Gly108, and 127–132; that span reads FGRMTL.

Belongs to the RNA methyltransferase RlmH family. As to quaternary structure, homodimer.

The protein resides in the cytoplasm. The enzyme catalyses pseudouridine(1915) in 23S rRNA + S-adenosyl-L-methionine = N(3)-methylpseudouridine(1915) in 23S rRNA + S-adenosyl-L-homocysteine + H(+). Specifically methylates the pseudouridine at position 1915 (m3Psi1915) in 23S rRNA. The polypeptide is Ribosomal RNA large subunit methyltransferase H (Lactococcus lactis subsp. cremoris (strain SK11)).